The chain runs to 423 residues: Maltooligosaccharide ABC transporter solute-binding lipoprotein (423 aa).

The N-terminal stretch at 1–24 (MSSKFMKSTAVLGTVTLASLLLVA) is a signal peptide. The N-palmitoyl cysteine moiety is linked to residue Cys-25. A lipid anchor (S-diacylglycerol cysteine) is attached at Cys-25. Substrate is bound by residues Tyr-52, Asp-77, Asp-83, 103–104 (DR), Glu-148, Asp-193, Asn-196, 251–254 (EGAG), Trp-274, and Lys-307.

Belongs to the bacterial solute-binding protein 1 family.

The protein resides in the cell membrane. Part of an ABC transporter complex involved in the uptake of maltodextrins. Binds glycogen-derived linear maltooligosaccharides increasing in size from maltotriose to maltooctaose with the highest affinity for maltotriose. Has a very weak affinity for maltose. Has also a very low affinity for maltotetraitol, indicating that the binding is selective for maltooligosaccharides with an intact reducing end. The polypeptide is Maltooligosaccharide ABC transporter solute-binding lipoprotein (malX) (Streptococcus pneumoniae (strain ATCC BAA-255 / R6)).